We begin with the raw amino-acid sequence, 124 residues long: Membrane-anchored ubiquitin-fold protein 2 (124 aa).

The 67-residue stretch at 8–74 (LEIKFRLNDG…LENNKTVGDC (67 aa)) folds into the Ubiquitin-like domain. Residues C115, C117, C119, and C124 are each lipidated (S-palmitoyl cysteine).

In terms of processing, acylated protein. Probably modified with palmitate. As to expression, ubiquitous, but three fold higher expression in stamens.

It is found in the cell membrane. Functionally, may serve as docking site to facilitate the association of other proteins to the plasma membrane. This Arabidopsis thaliana (Mouse-ear cress) protein is Membrane-anchored ubiquitin-fold protein 2 (MUB2).